Consider the following 642-residue polypeptide: ATP-dependent zinc metalloprotease FtsH (642 aa).

Over 1 to 6 (MGRFTK) the chain is Cytoplasmic. Residues 7–27 (NIVLYLLIIAAFVIAIDAFSG) form a helical membrane-spanning segment. Residues 28 to 101 (QSANKSELSY…TAAPPEQPAW (74 aa)) lie on the Extracellular side of the membrane. A helical transmembrane segment spans residues 102-122 (WMSLLGSAIPIIILVVLFFFI). The Cytoplasmic portion of the chain corresponds to 123-642 (MQQTQGGGGR…LSEASSNEIK (520 aa)). Residue 194-201 (GPPGTGKT) participates in ATP binding. H416 lines the Zn(2+) pocket. Residue E417 is part of the active site. Zn(2+) is bound by residues H420 and D492. Over residues 597 to 610 (TTKEPEAEEPKVAS) the composition is skewed to basic and acidic residues. The tract at residues 597-642 (TTKEPEAEEPKVASEADSSIVPEGVDAKKTTSTVADLSEASSNEIK) is disordered. Polar residues predominate over residues 626 to 642 (TTSTVADLSEASSNEIK).

The protein in the central section; belongs to the AAA ATPase family. It in the C-terminal section; belongs to the peptidase M41 family. Homohexamer. The cofactor is Zn(2+).

It is found in the cell membrane. Its function is as follows. Acts as a processive, ATP-dependent zinc metallopeptidase for both cytoplasmic and membrane proteins. Plays a role in the quality control of integral membrane proteins. The protein is ATP-dependent zinc metalloprotease FtsH of Veillonella parvula (strain ATCC 10790 / DSM 2008 / CCUG 5123 / JCM 12972 / NCTC 11810 / Te3) (Veillonella alcalescens).